We begin with the raw amino-acid sequence, 238 residues long: Large ribosomal subunit protein uL3 (238 aa).

Disordered stretches follow at residues 140-164 (SHRS…KMPG) and 212-238 (LPKE…QEGA). The residue at position 151 (glutamine 151) is an N5-methylglutamine. Residues 225–238 (AGGEAEAAAQQEGA) are compositionally biased toward low complexity.

It belongs to the universal ribosomal protein uL3 family. As to quaternary structure, part of the 50S ribosomal subunit. Forms a cluster with proteins L14 and L19. Methylated by PrmB.

One of the primary rRNA binding proteins, it binds directly near the 3'-end of the 23S rRNA, where it nucleates assembly of the 50S subunit. The protein is Large ribosomal subunit protein uL3 of Bradyrhizobium diazoefficiens (strain JCM 10833 / BCRC 13528 / IAM 13628 / NBRC 14792 / USDA 110).